The sequence spans 127 residues: MPTINQLIRQPRVSARVKSKSPALENSPQKRGVCTRVYTTTPKKPNSALRKVAKVRLTNGFEVISYIGGEGHNLQEHSVVLLRGGRVKDLPGVRYHMVRGALDTQGVKDRKQARSKYGTKRAKAGKK.

Asp-89 is subject to 3-methylthioaspartic acid. Residues 104-127 (TQGVKDRKQARSKYGTKRAKAGKK) are disordered. The span at 113-127 (ARSKYGTKRAKAGKK) shows a compositional bias: basic residues.

This sequence belongs to the universal ribosomal protein uS12 family. As to quaternary structure, part of the 30S ribosomal subunit. Contacts proteins S8 and S17. May interact with IF1 in the 30S initiation complex.

Functionally, with S4 and S5 plays an important role in translational accuracy. Interacts with and stabilizes bases of the 16S rRNA that are involved in tRNA selection in the A site and with the mRNA backbone. Located at the interface of the 30S and 50S subunits, it traverses the body of the 30S subunit contacting proteins on the other side and probably holding the rRNA structure together. The combined cluster of proteins S8, S12 and S17 appears to hold together the shoulder and platform of the 30S subunit. This is Small ribosomal subunit protein uS12 from Herminiimonas arsenicoxydans.